The sequence spans 65 residues: Large ribosomal subunit protein uL29 (65 aa).

This sequence belongs to the universal ribosomal protein uL29 family.

In Hyphomonas neptunium (strain ATCC 15444), this protein is Large ribosomal subunit protein uL29.